Reading from the N-terminus, the 203-residue chain is Guanylate kinase (203 aa).

The 179-residue stretch at 3-181 (GTLYIVAAPS…AVSEMCAIFT (179 aa)) folds into the Guanylate kinase-like domain. Position 10 to 17 (10 to 17 (APSGAGKS)) interacts with ATP.

It belongs to the guanylate kinase family.

The protein resides in the cytoplasm. It carries out the reaction GMP + ATP = GDP + ADP. In terms of biological role, essential for recycling GMP and indirectly, cGMP. This Xanthomonas campestris pv. campestris (strain 8004) protein is Guanylate kinase.